Here is a 457-residue protein sequence, read N- to C-terminus: MQKYIVEARSLLALAIPVVIAQLSQTAMGVVDTIMAGSVSATDMAAVAVGTSIWLPAILFGHGLLLALTPTVAQLNGSGRRSQIAHQVRQGFWLALCVSVLIMLVLYNSDHVIKQMDNIDPVLAQKAVGFLHAIMWGVPGYLFFQVLRNQCEGLSKTKPGMVIGFVGLLVNIPINYIFIYGKFGAPALGGVGCGVATASVYWVMFLMMRWYVTRARSQQDIKLEKGFAAPDWQVMKRLSGLGLPVALALFFEVTLFAVVALLVSPLGIVAVAGHQIALNFSSLMFMLPMSLSVAATIRVGFRLGQGAVEQAQVAAYTSMAVGLLLASVTAVFTIVFREHIALLYNKTPEVVTMASHLMLLAALYQLSDAVQVIGSGVLRGYKDTRSIFFITFTAYWLLGLPSGYLLGLTDYILPAMGPAGFWIGFIIGLTAAAILMVLRIRWLQKQPTAFILQRAAH.

The next 12 membrane-spanning stretches (helical) occupy residues 11-31 (LLALAIPVVIAQLSQTAMGVV), 46-66 (AVAVGTSIWLPAILFGHGLLL), 93-113 (WLALCVSVLIMLVLYNSDHVI), 127-147 (AVGFLHAIMWGVPGYLFFQVL), 160-180 (GMVIGFVGLLVNIPINYIFIY), 188-208 (LGGVGCGVATASVYWVMFLMM), 243-263 (LPVALALFFEVTLFAVVALLV), 283-301 (LMFMLPMSLSVAATIRVGF), 316-336 (YTSMAVGLLLASVTAVFTIVF), 357-377 (LMLLAALYQLSDAVQVIGSGV), 387-407 (IFFITFTAYWLLGLPSGYLLG), and 418-438 (PAGFWIGFIIGLTAAAILMVL).

This sequence belongs to the multi antimicrobial extrusion (MATE) (TC 2.A.66.1) family. MdtK subfamily.

Its subcellular location is the cell inner membrane. Multidrug efflux pump that functions probably as a Na(+)/drug antiporter. This chain is Multidrug resistance protein MdtK, found in Yersinia pseudotuberculosis serotype IB (strain PB1/+).